The following is a 103-amino-acid chain: NADH-ubiquinone oxidoreductase chain 4L (103 aa).

Transmembrane regions (helical) follow at residues 6-26, 31-51, and 65-85; these read IFFL…GIFI, IIII…NFAI, and ILYT…ILII.

This sequence belongs to the complex I subunit 4L family.

Its subcellular location is the mitochondrion membrane. It carries out the reaction a ubiquinone + NADH + 5 H(+)(in) = a ubiquinol + NAD(+) + 4 H(+)(out). Functionally, core subunit of the mitochondrial membrane respiratory chain NADH dehydrogenase (Complex I) that is believed to belong to the minimal assembly required for catalysis. Complex I functions in the transfer of electrons from NADH to the respiratory chain. The immediate electron acceptor for the enzyme is believed to be ubiquinone. In Acanthamoeba castellanii (Amoeba), this protein is NADH-ubiquinone oxidoreductase chain 4L (ND4L).